Reading from the N-terminus, the 230-residue chain is LexA repressor (230 aa).

The segment at 1–21 (MSDDSSETRTGGRRGADAGLT) is disordered. A DNA-binding region (H-T-H motif) is located at residues 44–64 (IREIGDAVGLTSTSSVAHQLR). Catalysis depends on for autocatalytic cleavage activity residues Ser-154 and Lys-191.

The protein belongs to the peptidase S24 family. In terms of assembly, homodimer.

It catalyses the reaction Hydrolysis of Ala-|-Gly bond in repressor LexA.. Functionally, represses a number of genes involved in the response to DNA damage (SOS response), including recA and lexA. In the presence of single-stranded DNA, RecA interacts with LexA causing an autocatalytic cleavage which disrupts the DNA-binding part of LexA, leading to derepression of the SOS regulon and eventually DNA repair. The polypeptide is LexA repressor (Mycobacterium sp. (strain JLS)).